A 469-amino-acid polypeptide reads, in one-letter code: tRNA(Ile)-lysidine synthase (469 aa).

26–31 (SGGPDS) is an ATP binding site.

It belongs to the tRNA(Ile)-lysidine synthase family.

The protein resides in the cytoplasm. The enzyme catalyses cytidine(34) in tRNA(Ile2) + L-lysine + ATP = lysidine(34) in tRNA(Ile2) + AMP + diphosphate + H(+). Functionally, ligates lysine onto the cytidine present at position 34 of the AUA codon-specific tRNA(Ile) that contains the anticodon CAU, in an ATP-dependent manner. Cytidine is converted to lysidine, thus changing the amino acid specificity of the tRNA from methionine to isoleucine. This is tRNA(Ile)-lysidine synthase from Shouchella clausii (strain KSM-K16) (Alkalihalobacillus clausii).